The chain runs to 506 residues: MNTMTLTPGQLSLSQLYDVWRHPVQLRLDASAIDGINASVACVNDIVAEGRTAYGINTGFGLLAQTRIADEDLQNLQRSLVLSHAAGVGDPLDDAMVRLIMVLKINSLARGCSGIRLSVIEALIALVNAGVYPLIPAKGSVGASGDLAPLAHLSLMLLGEGKARWQGEWLPAQTALKKAGLEPVALAAKEGLALLNGTQASTAFALRGLFEAQELFASAVVCGALTTEAVLGSRRPFDARIHAARGQQGQIDVARLFRHLLTDTSAIAESHHHCHKVQDPYSLRCQPQVMGACLTQLRQTKEVLLAEANAVSDNPLVFADAGEVISGGNFHAEPVAMAADNLALAIAEIGALSERRIALMMDKHMSQLPPFLVKNGGVNSGFMIAQVTAAALASENKALAHPHSVDSLPTSANQEDHVSMAPAAGRRLWEMVANTRGIIAVEWLAACQGIDLREGLTSSPLLEQARQTLRERVAHYTQDRFFAPDIECATALLAQGALQRLVPDFM.

The segment at residues 143–145 (ASG) is a cross-link (5-imidazolinone (Ala-Gly)). Serine 144 carries the post-translational modification 2,3-didehydroalanine (Ser).

Belongs to the PAL/histidase family. Post-translationally, contains an active site 4-methylidene-imidazol-5-one (MIO), which is formed autocatalytically by cyclization and dehydration of residues Ala-Ser-Gly.

It is found in the cytoplasm. The enzyme catalyses L-histidine = trans-urocanate + NH4(+). It participates in amino-acid degradation; L-histidine degradation into L-glutamate; N-formimidoyl-L-glutamate from L-histidine: step 1/3. The chain is Histidine ammonia-lyase from Salmonella choleraesuis (strain SC-B67).